The following is a 297-amino-acid chain: Transcriptional regulator protein Pur-beta (297 aa).

Disordered regions lie at residues 1-26 (MADG…EQET) and 275-297 (QERH…VDDD). A2 carries the N-acetylalanine modification. The interval 23–246 (EQETQELASK…LRVSEVKPSY (224 aa)) is DNA-binding. Residues 275–288 (QERHRDKMYERREE) show a composition bias toward basic and acidic residues.

Belongs to the PUR DNA-binding protein family.

The protein localises to the nucleus. In terms of biological role, transcriptional regulator which can act as an activator or a repressor. This Danio rerio (Zebrafish) protein is Transcriptional regulator protein Pur-beta (purb).